Consider the following 337-residue polypeptide: Lipoyl synthase (337 aa).

[4Fe-4S] cluster contacts are provided by Cys-81, Cys-86, Cys-92, Cys-107, Cys-111, Cys-114, and Ser-323. Residues 93–312 (FSHGTATFMI…EDYGNALGFS (220 aa)) form the Radical SAM core domain.

It belongs to the radical SAM superfamily. Lipoyl synthase family. Requires [4Fe-4S] cluster as cofactor.

The protein localises to the cytoplasm. It catalyses the reaction [[Fe-S] cluster scaffold protein carrying a second [4Fe-4S](2+) cluster] + N(6)-octanoyl-L-lysyl-[protein] + 2 oxidized [2Fe-2S]-[ferredoxin] + 2 S-adenosyl-L-methionine + 4 H(+) = [[Fe-S] cluster scaffold protein] + N(6)-[(R)-dihydrolipoyl]-L-lysyl-[protein] + 4 Fe(3+) + 2 hydrogen sulfide + 2 5'-deoxyadenosine + 2 L-methionine + 2 reduced [2Fe-2S]-[ferredoxin]. The protein operates within protein modification; protein lipoylation via endogenous pathway; protein N(6)-(lipoyl)lysine from octanoyl-[acyl-carrier-protein]: step 2/2. Functionally, catalyzes the radical-mediated insertion of two sulfur atoms into the C-6 and C-8 positions of the octanoyl moiety bound to the lipoyl domains of lipoate-dependent enzymes, thereby converting the octanoylated domains into lipoylated derivatives. This Xanthomonas axonopodis pv. citri (strain 306) protein is Lipoyl synthase.